The following is a 426-amino-acid chain: MKKMIIHGGKRLSGELTIGGAKNSTVALIPAAILADTPVQFDTVPHILDVHNLRLILESMNVHSTFENDVLTIDPTNIEESELPSHAIKSLRASYYFMGALLGRFNRATVTFPGGDNIGPRPIDQHIKGFKALGANVVEENDSVFISTGTEGLHGARIFLDVVSVGATINIILAAVKAHGTTTIENAAKEPEIIDLATFLNNMGAKIRGAGTDVIRIEGVPALHSRATHTIIPDRIETGTYLSLAASIGDGILLKNVIPEHMESFTAKLVEMGVDLQINEDSIYVPRSNDLDPIRVKTMTYPGFATDLQQPITPLLLRANGSSVVIDTIYPQRTQHVEQLRKMGADIRVQDNLIVVGHSSHLQGAHVEAGEIRSGAALMIAGLAASGVTEISRADNILRGYDRVIDKLHTLGADVEIAADEEVPEN.

22–23 (KN) contributes to the phosphoenolpyruvate binding site. Arg-92 lines the UDP-N-acetyl-alpha-D-glucosamine pocket. Asp-116 functions as the Proton donor in the catalytic mechanism. Residues 121-125 (RPIDQ), Asp-307, and Ile-329 contribute to the UDP-N-acetyl-alpha-D-glucosamine site.

This sequence belongs to the EPSP synthase family. MurA subfamily.

Its subcellular location is the cytoplasm. It carries out the reaction phosphoenolpyruvate + UDP-N-acetyl-alpha-D-glucosamine = UDP-N-acetyl-3-O-(1-carboxyvinyl)-alpha-D-glucosamine + phosphate. The protein operates within cell wall biogenesis; peptidoglycan biosynthesis. In terms of biological role, cell wall formation. Adds enolpyruvyl to UDP-N-acetylglucosamine. The sequence is that of UDP-N-acetylglucosamine 1-carboxyvinyltransferase 2 from Lactiplantibacillus plantarum (strain ATCC BAA-793 / NCIMB 8826 / WCFS1) (Lactobacillus plantarum).